The following is an 88-amino-acid chain: Small ribosomal subunit protein bS20 (88 aa).

The protein belongs to the bacterial ribosomal protein bS20 family.

Functionally, binds directly to 16S ribosomal RNA. In Clostridium novyi (strain NT), this protein is Small ribosomal subunit protein bS20.